The chain runs to 752 residues: Cation-transporting P-type ATPase B (752 aa).

Positions 15-78 constitute an HMA domain; that stretch reads RRIRLDVLGM…VVEKAGYHAA (64 aa). Positions 26 and 29 each coordinate a metal cation. The next 6 helical transmembrane spans lie at 105–125, 132–152, 167–187, 201–221, 361–381, and 390–410; these read LLVAAVLFVPLADLSTLFAIV, GWGYILTALAAPVVTWAAWPF, METLISVGIVAATAWSLSSVF, AILNSDSIYLEVAAGVTVFVL, IAGVFVPVVFVIAGLAGAAWL, and AFSVTLGVLVIACPCALGLAT. Asp-446 serves as the catalytic 4-aspartylphosphate intermediate. Transmembrane regions (helical) follow at residues 491–511 and 714–734; these read MAAAIVAASPDPGPVNGFVAV and AIPIAAAGLLNPLIAGAAMAF.

It belongs to the cation transport ATPase (P-type) (TC 3.A.3) family. Type IB subfamily.

It is found in the cell membrane. The enzyme catalyses ATP + H2O = ADP + phosphate + H(+). The sequence is that of Cation-transporting P-type ATPase B (ctpB) from Mycobacterium tuberculosis (strain ATCC 25618 / H37Rv).